The sequence spans 353 residues: Cytochrome c biogenesis protein CcsA (353 aa).

8 consecutive transmembrane segments (helical) span residues 15 to 35 (FAIL…PNLP), 37 to 57 (LAAL…TLLG), 68 to 88 (LSNL…VHLI), 97 to 117 (LVGV…TMTL), 142 to 162 (VMML…AFLI), 261 to 281 (IIGL…VWAN), 288 to 308 (WSWD…AAYL), and 322 to 342 (AILA…VNLL).

It belongs to the CcmF/CycK/Ccl1/NrfE/CcsA family. May interact with ccs1.

The protein localises to the cellular thylakoid membrane. Required during biogenesis of c-type cytochromes (cytochrome c6 and cytochrome f) at the step of heme attachment. The polypeptide is Cytochrome c biogenesis protein CcsA (Nostoc punctiforme (strain ATCC 29133 / PCC 73102)).